Consider the following 316-residue polypeptide: tRNA methyltransferase 10 homolog B (316 aa).

2 disordered regions span residues 1-30 (MDCE…RDDG) and 42-98 (VEYD…DLGN). Over residues 63–82 (VQRKQRHWERIVSSKKSKRK) the composition is skewed to basic residues. Positions 75–96 (SSKKSKRKQERERRKIKRAEDL) form a coiled coil. Over residues 83 to 95 (QERERRKIKRAED) the composition is skewed to basic and acidic residues. One can recognise an SAM-dependent MTase TRM10-type domain in the interval 113–310 (TKEKLLEAKH…KGVSPGKGYI (198 aa)).

Belongs to the class IV-like SAM-binding methyltransferase superfamily. TRM10 family.

It catalyses the reaction guanosine(9) in tRNA + S-adenosyl-L-methionine = N(1)-methylguanosine(9) in tRNA + S-adenosyl-L-homocysteine + H(+). S-adenosyl-L-methionine-dependent guanine N(1)-methyltransferase that catalyzes the formation of N(1)-methylguanine at position 9 (m1G9) in tRNAs. Probably not able to catalyze formation of N(1)-methyladenine at position 9 (m1A9) in tRNAs. The chain is tRNA methyltransferase 10 homolog B (Trmt10b) from Rattus norvegicus (Rat).